The sequence spans 20 residues: 23 kDa cell wall protein (20 aa).

The protein localises to the secreted. Its subcellular location is the cell wall. This chain is 23 kDa cell wall protein, found in Solanum lycopersicum (Tomato).